The following is a 134-amino-acid chain: Histone H3-like centromeric protein A (134 aa).

Over residues 1-14 the composition is skewed to basic residues; that stretch reads MGPRRKPQTPRRRP. The tract at residues 1–34 is disordered; it reads MGPRRKPQTPRRRPSSPAPGPSRQSSSVGSQTLR. Glycine 2 is subject to N,N,N-trimethylglycine. Serine 16 and serine 22 each carry phosphoserine. The tract at residues 34–48 is important for flexibility of DNA ends that protrude from nucleosomes; sequence RRRQKFMWLKEIKTL. Residues 35-134 form an H3-like region; sequence RRQKFMWLKE…RIRGFEGGLP (100 aa). Phosphoserine is present on serine 62. The CATD stretch occupies residues 69–110; sequence CEKFSRGVDFWWQAQALLALQEAAEAFLIHLFEDAYLLSLHA.

The protein belongs to the histone H3 family. As to quaternary structure, component of centromeric nucleosomes, where DNA is wrapped around a histone octamer core. The octamer contains two molecules each of H2A, H2B, CENPA and H4 assembled in one CENPA-H4 heterotetramer and two H2A-H2B heterodimers. CENPA modulates the DNA-binding characteristics of nucleosomes so that protruding DNA ends have higher flexibility than in nucleosomes containing conventional histone H3. Inhibits binding of histone H1 to nucleosomes, since histone H1 binds preferentially to rigid DNA linkers that protrude from nucleosomes. Nucleosomes containing CENPA also contain histone H2A variants such as MACROH2A and H2A.Z/H2AZ1. The CENPA-H4 heterotetramer is more compact and structurally more rigid than corresponding H3-H4 heterotetramers. Can assemble into nucleosomes that contain both CENPA and histone H3.3; these nucleosomes interact with a single CENPC chain. Heterotrimer composed of HJURP, CENPA and histone H4, where HJURP interacts with the dimer formed by CENPA and histone H4 and prevents tetramerization of CENPA and H4. Component of the CENPA-NAC complex, at least composed of CENPA, CENPC, CENPH, CENPM, CENPN, CENPT and CENPU. Interacts (via CATD domain) with HJURP; the interaction is direct and is required for its localization to centromeres. Interacts with CENPC, CENPN and CENPT; interaction is direct. Part of a centromere complex consisting of CENPA, CENPT and CENPW. Identified in centromere complexes containing histones H2A, H2B and H4, and at least CENPA, CENPB, CENPC, CENPT, CENPN, HJURP, SUPT16H, SSRP1 and RSF1. Can self-associate. The CENPA-H4 heterotetramer can bind DNA by itself (in vitro). Interacts with CDK1, PPP1CA and RBBP7. In terms of processing, poly-ADP-ribosylated by PARP1. Trimethylated by NTMT1 at the N-terminal glycine after cleavage of Met-1. Methylation is low before incorporation into nucleosomes and increases with cell cycle progression, with the highest levels in mitotic nucleosomes. Post-translationally, phosphorylated by CDK1 at Ser-62 during early mitosis; this abolishes association with chromatin and centromeres, prevents interaction with HJURP and thereby prevents premature assembly of CENPA into centromeres. Dephosphorylated at Ser-62 by PPP1CA during late mitosis.

The protein resides in the nucleus. Its subcellular location is the chromosome. It localises to the centromere. Histone H3-like nucleosomal protein that is specifically found in centromeric nucleosomes. Replaces conventional H3 in the nucleosome core of centromeric chromatin that serves as an assembly site for the inner kinetochore. The presence of CENPA subtly modifies the nucleosome structure and the way DNA is wrapped around the nucleosome and gives rise to protruding DNA ends that are less well-ordered and rigid compared to nucleosomes containing histone H3. May serve as an epigenetic mark that propagates centromere identity through replication and cell division. Required for recruitment and assembly of kinetochore proteins, and as a consequence required for progress through mitosis, chromosome segregation and cytokinesis. The sequence is that of Histone H3-like centromeric protein A (Cenpa) from Mus musculus (Mouse).